A 135-amino-acid polypeptide reads, in one-letter code: Small ribosomal subunit protein uS12 (135 aa).

Asp89 bears the 3-methylthioaspartic acid mark. Residues 106–135 (GVANRRQSRSKYGAKRPKAGAAQATKGGKK) form a disordered region. The span at 111 to 123 (RQSRSKYGAKRPK) shows a compositional bias: basic residues. A compositionally biased stretch (low complexity) spans 124-135 (AGAAQATKGGKK).

Belongs to the universal ribosomal protein uS12 family. In terms of assembly, part of the 30S ribosomal subunit. Contacts proteins S8 and S17. May interact with IF1 in the 30S initiation complex.

In terms of biological role, with S4 and S5 plays an important role in translational accuracy. Its function is as follows. Interacts with and stabilizes bases of the 16S rRNA that are involved in tRNA selection in the A site and with the mRNA backbone. Located at the interface of the 30S and 50S subunits, it traverses the body of the 30S subunit contacting proteins on the other side and probably holding the rRNA structure together. The combined cluster of proteins S8, S12 and S17 appears to hold together the shoulder and platform of the 30S subunit. In Hydrogenobaculum sp. (strain Y04AAS1), this protein is Small ribosomal subunit protein uS12.